The primary structure comprises 150 residues: Large ribosomal subunit protein bL9 (150 aa).

The protein belongs to the bacterial ribosomal protein bL9 family.

Its function is as follows. Binds to the 23S rRNA. The polypeptide is Large ribosomal subunit protein bL9 (Corynebacterium glutamicum (strain ATCC 13032 / DSM 20300 / JCM 1318 / BCRC 11384 / CCUG 27702 / LMG 3730 / NBRC 12168 / NCIMB 10025 / NRRL B-2784 / 534)).